The chain runs to 235 residues: Exosome complex component RRP46 (235 aa).

Residues M1 to A13 show a composition bias toward basic and acidic residues. A disordered region spans residues M1–P24. Position 20 is a phosphoserine (S20).

This sequence belongs to the RNase PH family. In terms of assembly, homodimer. Component of the RNA exosome core complex (Exo-9), composed of EXOSC1, EXOSC2, EXOSC3, EXOSC4, EXOSC5, EXOSC6, EXOSC7, EXOSC8 and EXOSC9; within the complex interacts with EXOSC3, EXOSC8, and EXOSC9. The catalytically inactive RNA exosome core complex (Exo-9) associates with the catalytic subunit EXOSC10/RRP6. Exo-9 may associate with DIS3 to form the nucleolar exosome complex, or DIS3L to form the cytoplasmic exosome complex. Exo-9 is formed by a hexameric base ring consisting of the heterodimers EXOSC4-EXOSC9, EXOSC5-EXOSC8 and EXOSC6-EXOSC7, and a cap ring consisting of EXOSC1, EXOSC2 and EXOSC3. The RNA exosome complex associates with cofactors C1D/RRP47, MPHOSPH6/MPP6 and MTREX/MTR4. Interacts with GTPBP1. Interacts with ZC3HAV1. Interacts with DDX17 only in the presence of ZC3HAV1 in an RNA-independent manner. Highly expressed in a variety of hematopoietic and epithelial tumor cell lines, but not in normal hematopoietic tissues or other normal tissue, with the exception of testis.

It localises to the nucleus. It is found in the nucleolus. Its subcellular location is the cytoplasm. Its function is as follows. Non-catalytic component of the RNA exosome complex which has 3'-&gt;5' exoribonuclease activity and participates in a multitude of cellular RNA processing and degradation events. In the nucleus, the RNA exosome complex is involved in proper maturation of stable RNA species such as rRNA, snRNA and snoRNA, in the elimination of RNA processing by-products and non-coding 'pervasive' transcripts, such as antisense RNA species and promoter-upstream transcripts (PROMPTs), and of mRNAs with processing defects, thereby limiting or excluding their export to the cytoplasm. The RNA exosome may be involved in Ig class switch recombination (CSR) and/or Ig variable region somatic hypermutation (SHM) by targeting AICDA deamination activity to transcribed dsDNA substrates. In the cytoplasm, the RNA exosome complex is involved in general mRNA turnover and specifically degrades inherently unstable mRNAs containing AU-rich elements (AREs) within their 3' untranslated regions, and in RNA surveillance pathways, preventing translation of aberrant mRNAs. It seems to be involved in degradation of histone mRNA. The catalytic inactive RNA exosome core complex of 9 subunits (Exo-9) is proposed to play a pivotal role in the binding and presentation of RNA for ribonucleolysis, and to serve as a scaffold for the association with catalytic subunits and accessory proteins or complexes. In vitro, EXOSC5 does not bind or digest single-stranded RNA and binds to double-stranded DNA without detectable DNase activity. This chain is Exosome complex component RRP46 (EXOSC5), found in Homo sapiens (Human).